Consider the following 464-residue polypeptide: Signal recognition particle 54 kDa protein (464 aa).

GTP-binding positions include 104 to 111 (GLQGSGKT), 184 to 188 (DTAGR), and 242 to 245 (TKLD).

It belongs to the GTP-binding SRP family. SRP54 subfamily. As to quaternary structure, part of the signal recognition particle protein translocation system, which is composed of SRP and FtsY. Archaeal SRP consists of a 7S RNA molecule of 300 nucleotides and two protein subunits: SRP54 and SRP19.

The protein localises to the cytoplasm. The catalysed reaction is GTP + H2O = GDP + phosphate + H(+). Its function is as follows. Involved in targeting and insertion of nascent membrane proteins into the cytoplasmic membrane. Binds to the hydrophobic signal sequence of the ribosome-nascent chain (RNC) as it emerges from the ribosomes. The SRP-RNC complex is then targeted to the cytoplasmic membrane where it interacts with the SRP receptor FtsY. This is Signal recognition particle 54 kDa protein from Halorubrum lacusprofundi (strain ATCC 49239 / DSM 5036 / JCM 8891 / ACAM 34).